A 293-amino-acid polypeptide reads, in one-letter code: Acidic endochitinase SE2 (293 aa).

The signal sequence occupies residues 1-25 (MAAKIVSVLFLISLLIFASFESSHG). One can recognise a GH18 domain in the interval 26-293 (SQIVIYWGQN…GYSSAIKSSV (268 aa)). Intrachain disulfides connect cysteine 45/cysteine 91 and cysteine 75/cysteine 81. The active-site Proton donor is glutamate 151. A disulfide bond links cysteine 183 and cysteine 212.

This sequence belongs to the glycosyl hydrolase 18 family. Chitinase class II subfamily. Accumulates in leaves during infection.

It is found in the secreted. Its subcellular location is the extracellular space. The catalysed reaction is Random endo-hydrolysis of N-acetyl-beta-D-glucosaminide (1-&gt;4)-beta-linkages in chitin and chitodextrins.. In terms of biological role, this protein functions as a defense against chitin containing fungal pathogens. This endochitinase also exhibits exochitinase activity, i.e. it is capable of hydrolyzing chito-oligosaccharides, including chitobiose. The protein is Acidic endochitinase SE2 (SE2) of Beta vulgaris (Sugar beet).